Consider the following 316-residue polypeptide: Homoserine kinase (316 aa).

97–107 contacts ATP; sequence PPARGLGSSAS.

Belongs to the GHMP kinase family. Homoserine kinase subfamily.

The protein localises to the cytoplasm. The enzyme catalyses L-homoserine + ATP = O-phospho-L-homoserine + ADP + H(+). The protein operates within amino-acid biosynthesis; L-threonine biosynthesis; L-threonine from L-aspartate: step 4/5. Functionally, catalyzes the ATP-dependent phosphorylation of L-homoserine to L-homoserine phosphate. The sequence is that of Homoserine kinase from Prochlorococcus marinus (strain MIT 9313).